The sequence spans 265 residues: Short-chain dehydrogenase/reductase phqE (265 aa).

Positions 23, 24, 26, 46, 47, 50, 76, 131, 203, and 205 each coordinate NADP(+). Residues 25-45 form a helical membrane-spanning segment; it reads GIGFAVCAAALGHGAIVTIVG.

Belongs to the short-chain dehydrogenases/reductases (SDR) family. Requires NADP(+) as cofactor.

It is found in the membrane. The protein operates within alkaloid biosynthesis. Functionally, short-chain dehydrogenase/reductase; part of the gene cluster that mediates the biosynthesis of paraherquamide, a fungal indole alkaloid that belongs to a family of natural products containing a characteristic bicyclo[2.2.2]diazaoctane core. The first steps in the biosynthesis of paraherquamide is the production of the beta-methyl-proline precursor from L-isoleucine. They require oxidation of a terminally hydroxylated L-isoleucine to the corresponding aldehyde by enzymes which have still to be identified. Spontaneous cyclization and dehydration would yield the 4-methyl pyrolline-5-carboxylic acid, which is then reduced by the pyrroline-5-carboxylate reductase phqD leading to the beta-methyl-proline precursor. The next step of paraherquamide biosynthesis involves coupling of beta-methyl-proline and L-tryptophan by the bimodular NRPS phqB, to produce a monooxopiperazine intermediate. The reductase (R) domain of phqB utilizes NADPH for hydride transfer to reduce the thioester bond of the T domain-tethered linear dipeptide to a hemithioaminal intermediate, which spontaneously cleaves the C-S bond to release the aldehyde product. This compound undergoes spontaneous cyclization and dehydration to give a dienamine which is reverse prenylated at C-2 by the reverse prenyltransferase phqJ. The other prenyltransferase present in the cluster, phqI may be a redundant gene in the pathway. During biosynthetic assembly, the key step to produce the polycyclic core is catalyzed by the bifunctional reductase and intramolecular [4+2] Diels-Alderase, phqE, resulting in formation of the [2.2.2] diazaoctane intermediate preparaherquamide. Following formation of preparaherquamide, an indole 2,3-epoxidation-initiated pinacol-like rearrangement is catalyzed by the phqK FAD-dependent monooxygenase. The prenyltransferase phqA, the cytochrome P450 monooxygenase phqL, and the FAD-linked oxidoreductase phqH (or the cytochrome P450 monooxygenase phqM), are proposed to be involved in the formation of the pyran ring. The FAD-dependent monooxygenase phqK is likely responsible for generation of the spiro-oxindole, and the N-methylation is likely mediated by the phqN methyltransferase leading to the isolable natural product paraherquamide F. However, the order of these biosynthetic steps has still to be determined. In late-stage paraherquamide biosynthesis, the third P450 monooxygenase, phqO, is probably responsible for the C-14 hydroxylation, transforming paraherquamide F to paraherquamide G, and paraherquamide E to the final product paraherquamide A. The expansion from the 6-membered ring pyran (in paraherquamides F and G) to the 7-membered dioxepin ring (in paraherquamides A and E) represents a poorly understood but intriguing process that probably involves the 2-oxoglutarate-dependent dioxygenase phqC. Finally, the remaining members of the paraherquamide cluster, including phqI as well as phqM (or phqH), do not have a clearly prescribed role and appear to be redundant. In Penicillium fellutanum, this protein is Short-chain dehydrogenase/reductase phqE.